A 360-amino-acid chain; its full sequence is GTPase Obg (360 aa).

Residues 1 to 156 (MFVDSVEIII…KCVRLELKLI (156 aa)) form the Obg domain. One can recognise an OBG-type G domain in the interval 157–360 (ADIGLVGFPN…LKFVLLKALP (204 aa)). GTP is bound by residues 163–170 (GFPNAGKS), 188–192 (FTTLV), 210–213 (DIPG), 279–282 (NKCD), and 341–343 (SAV). Positions 170 and 190 each coordinate Mg(2+).

This sequence belongs to the TRAFAC class OBG-HflX-like GTPase superfamily. OBG GTPase family. As to quaternary structure, monomer. Requires Mg(2+) as cofactor.

It localises to the cytoplasm. Its function is as follows. An essential GTPase which binds GTP, GDP and possibly (p)ppGpp with moderate affinity, with high nucleotide exchange rates and a fairly low GTP hydrolysis rate. Plays a role in control of the cell cycle, stress response, ribosome biogenesis and in those bacteria that undergo differentiation, in morphogenesis control. This is GTPase Obg from Helicobacter pylori (strain G27).